A 443-amino-acid chain; its full sequence is Protein IQ-DOMAIN 11 (443 aa).

The calmodulin-binding stretch occupies residues 5 to 20 (KGLFTVLKRIFISEVN). Short sequence motifs (nuclear localization signal) lie at residues 11–18 (LKRIFISE) and 27–34 (RRKWTFWK). The segment at 44-65 (ITAPPEHRTSHESHEEQKEEIV) is disordered. Residues 48–64 (PEHRTSHESHEEQKEEI) show a composition bias toward basic and acidic residues. IQ domains are found at residues 113 to 138 (AATRIQTAFRGHLARKALRALKGIVK) and 139 to 161 (LQAYIRGRAVRRQAMTTLKCLQS). Residues 277–293 (FSSKTKPKDETLNEKQL) are compositionally biased toward basic and acidic residues. The disordered stretch occupies residues 277 to 361 (FSSKTKPKDE…PRSFDTQSES (85 aa)).

This sequence belongs to the IQD family. Binds to multiple calmodulin (CaM) in the presence of Ca(2+) and CaM-like proteins. As to expression, expressed in hypocotyls, cotyledons, leaves and petioles.

The protein resides in the nucleus. The protein localises to the cytoplasm. It is found in the cytoskeleton. Its function is as follows. May be involved in cooperative interactions with calmodulins or calmodulin-like proteins. Recruits calmodulin proteins to microtubules, thus being a potential scaffold in cellular signaling and trafficking. Regulates cell shape and elongation in aerial organs (i.e. epidermis pavement cells) probably by regulating cortical microtubules (MT) arrays orientation. May associate with nucleic acids and regulate gene expression at the transcriptional or post-transcriptional level. The protein is Protein IQ-DOMAIN 11 of Arabidopsis thaliana (Mouse-ear cress).